A 358-amino-acid polypeptide reads, in one-letter code: sn-glycerol-3-phosphate import ATP-binding protein UgpC (358 aa).

Residues 4-235 (VELKQVRKTY…PATLFVASFI (232 aa)) form the ABC transporter domain. An ATP-binding site is contributed by 37 to 44 (GPSGCGKS).

Belongs to the ABC transporter superfamily. sn-glycerol-3-phosphate importer (TC 3.A.1.1.3) family. As to quaternary structure, the complex is composed of two ATP-binding proteins (UgpC), two transmembrane proteins (UgpA and UgpE) and a solute-binding protein (UgpB).

It localises to the cell inner membrane. It carries out the reaction sn-glycerol 3-phosphate(out) + ATP + H2O = sn-glycerol 3-phosphate(in) + ADP + phosphate + H(+). Functionally, part of the ABC transporter complex UgpBAEC involved in sn-glycerol-3-phosphate (G3P) import. Responsible for energy coupling to the transport system. The protein is sn-glycerol-3-phosphate import ATP-binding protein UgpC of Roseobacter denitrificans (strain ATCC 33942 / OCh 114) (Erythrobacter sp. (strain OCh 114)).